We begin with the raw amino-acid sequence, 269 residues long: Cytochrome c oxidase subunit 3 (269 aa).

The next 7 helical transmembrane spans lie at 21-41, 45-65, 90-110, 138-160, 167-187, 205-225, and 247-267; these read PWPMLLSFALLSLTLSLGLTM, IGNMNLVYLALLVVTLTSVFW, GFLLFVLSEVLIFAGLFWAYF, PLLNTIILLSSGATITYSHHALI, ALSGLFITIWLIIIFVTCQYI, FYAGTGLHFLHMVMLAVMLII, and ILYCHVLDIIWLFLYIVFYWW.

This sequence belongs to the cytochrome c oxidase subunit 3 family. As to quaternary structure, component of the cytochrome c oxidase (complex IV, CIV), a multisubunit enzyme composed of a catalytic core of 3 subunits and several supernumerary subunits. The complex exists as a monomer or a dimer and forms supercomplexes (SCs) in the inner mitochondrial membrane with ubiquinol-cytochrome c oxidoreductase (cytochrome b-c1 complex, complex III, CIII).

The protein resides in the mitochondrion inner membrane. It carries out the reaction 4 Fe(II)-[cytochrome c] + O2 + 8 H(+)(in) = 4 Fe(III)-[cytochrome c] + 2 H2O + 4 H(+)(out). Component of the cytochrome c oxidase, the last enzyme in the mitochondrial electron transport chain which drives oxidative phosphorylation. The respiratory chain contains 3 multisubunit complexes succinate dehydrogenase (complex II, CII), ubiquinol-cytochrome c oxidoreductase (cytochrome b-c1 complex, complex III, CIII) and cytochrome c oxidase (complex IV, CIV), that cooperate to transfer electrons derived from NADH and succinate to molecular oxygen, creating an electrochemical gradient over the inner membrane that drives transmembrane transport and the ATP synthase. Cytochrome c oxidase is the component of the respiratory chain that catalyzes the reduction of oxygen to water. Electrons originating from reduced cytochrome c in the intermembrane space (IMS) are transferred via the dinuclear copper A center (CU(A)) of subunit 2 and heme A of subunit 1 to the active site in subunit 1, a binuclear center (BNC) formed by heme A3 and copper B (CU(B)). The BNC reduces molecular oxygen to 2 water molecules using 4 electrons from cytochrome c in the IMS and 4 protons from the mitochondrial matrix. This is Cytochrome c oxidase subunit 3 (COX3) from Candida glabrata (strain ATCC 2001 / BCRC 20586 / JCM 3761 / NBRC 0622 / NRRL Y-65 / CBS 138) (Yeast).